Consider the following 528-residue polypeptide: OLD nuclease (528 aa).

Residues 1 to 153 (MLKRLQVKNF…LAQHLPSIRG (153 aa)) form an ATPase domain N-terminus region. Residue 31-35 (GAGKT) participates in ATP binding. The dimerization domain stretch occupies residues 154–245 (SILGRLLQPV…RESDLTLPGD (92 aa)). Residues 246 to 369 (ELGLGIQSAI…FDTARNEVLF (124 aa)) form an ATPase domain C-terminus region. The tract at residues 370-528 (AKRALLVEGY…IRQVTRPMEE (159 aa)) is toprim domain. Residues glutamate 377, aspartate 381, aspartate 431, and aspartate 433 each coordinate a divalent metal cation. The interval 440 to 461 (RADEETRRKQEQENKAEQEKNQ) is disordered. A divalent metal cation-binding residues include serine 478 and glutamate 480. Catalysis depends on arginine 487, which acts as the Stabilizes transition state or protonates leaving group.

This sequence belongs to the class 1 OLD nuclease family. As to quaternary structure, homodimer. Requires Mg(2+) as cofactor. Mn(2+) serves as cofactor. Ca(2+) is required as a cofactor.

It carries out the reaction Exonucleolytic cleavage in the 5'- to 3'-direction to yield nucleoside 5'-phosphates.. In terms of biological role, an exodeoxyribonuclease that degrades linear or supercoiled dsDNA from 5'-3'. Nicks and linearizes circular DNA. Activity is not stimulated by ATP or AMP-PNP, although it has DNA-stimulated ATPase activity. The sequence is that of OLD nuclease from Thermus scotoductus (strain ATCC 700910 / SA-01).